The primary structure comprises 36 residues: Photosystem I reaction center subunit VIII (36 aa).

Residues 4 to 24 (FSLPSILVPLVGLVLPAIAMA) traverse the membrane as a helical segment.

This sequence belongs to the PsaI family.

The protein resides in the plastid. The protein localises to the chloroplast thylakoid membrane. Functionally, may help in the organization of the PsaL subunit. The sequence is that of Photosystem I reaction center subunit VIII from Piper cenocladum (Ant piper).